A 260-amino-acid polypeptide reads, in one-letter code: Proteasome subunit alpha (260 aa).

This sequence belongs to the peptidase T1A family. The 20S proteasome core is composed of 14 alpha and 14 beta subunits that assemble into four stacked heptameric rings, resulting in a barrel-shaped structure. The two inner rings, each composed of seven catalytic beta subunits, are sandwiched by two outer rings, each composed of seven alpha subunits. The catalytic chamber with the active sites is on the inside of the barrel. Has a gated structure, the ends of the cylinder being occluded by the N-termini of the alpha-subunits. Is capped at one or both ends by the proteasome regulatory ATPase, PAN.

Its subcellular location is the cytoplasm. Its activity is regulated as follows. The formation of the proteasomal ATPase PAN-20S proteasome complex, via the docking of the C-termini of PAN into the intersubunit pockets in the alpha-rings, triggers opening of the gate for substrate entry. Interconversion between the open-gate and close-gate conformations leads to a dynamic regulation of the 20S proteasome proteolysis activity. Functionally, component of the proteasome core, a large protease complex with broad specificity involved in protein degradation. The sequence is that of Proteasome subunit alpha from Thermococcus kodakarensis (strain ATCC BAA-918 / JCM 12380 / KOD1) (Pyrococcus kodakaraensis (strain KOD1)).